The chain runs to 265 residues: MASTQCFLHHHALSTPARTPLVRSIVPSLKPNQLLVCRAQKQSAPQEDNVNSVSVSRRLALTVLIGAAAVGSKVSPADAAYGEAANVFGKPKTDTDFQTYNGDGFKLQIPSKWNPNKEVEYPGQVLRFEDNFDATSNVIVAITPTDKKSITDFGSPEQFLSQVDYLLGRQAYSGKTDSEGGFESDAVAIANVLETSSAEVGGKPYYYLSVLTRTADGNEGGKHQLITATVNDGKLYICKAQAGDKRWFKGAKKFVENTATSFSLA.

Residues 1–79 (MASTQCFLHH…VGSKVSPADA (79 aa)) constitute a chloroplast transit peptide.

Belongs to the PsbP family.

The protein resides in the plastid. It is found in the chloroplast thylakoid membrane. In terms of biological role, may be involved in the regulation of photosystem II. The chain is Oxygen-evolving enhancer protein 2-2, chloroplastic (PSBP2) from Nicotiana tabacum (Common tobacco).